Here is a 424-residue protein sequence, read N- to C-terminus: Nuclear hormone receptor family member nhr-55 (424 aa).

Positions 1–19 are enriched in low complexity; that stretch reads MNSPSSSSSFCSSSSSPSS. The disordered stretch occupies residues 1 to 20; it reads MNSPSSSSSFCSSSSSPSSL. Positions 25-100 form a DNA-binding region, nuclear receptor; sequence PDTCQVCGQK…VGMTIENFQF (76 aa). 2 consecutive NR C4-type zinc fingers follow at residues 28 to 55 and 64 to 88; these read CQVCGQKSHGKHFGAVTCRACAAFFRRC and CRRNMNCEFLKNGWFNCKPCRLKKC. An NR LBD domain is found at 169–424; that stretch reads EVPLHTPNAL…FSHPEVFIDL (256 aa).

The protein belongs to the nuclear hormone receptor family.

Its subcellular location is the nucleus. Its function is as follows. Orphan nuclear receptor. The sequence is that of Nuclear hormone receptor family member nhr-55 (nhr-55) from Caenorhabditis elegans.